We begin with the raw amino-acid sequence, 1345 residues long: Mediator of RNA polymerase II transcription subunit 13 (1345 aa).

Disordered regions lie at residues 363–387 (KSQT…SPYP) and 402–537 (FMAS…AESG). The span at 364–375 (SQTNQQQTSSNS) shows a compositional bias: low complexity. Polar residues predominate over residues 406–415 (PSVSGNSNEL). The segment covering 469–482 (LFGEEDEDEDDADL) has biased composition (acidic residues). Over residues 486–501 (SNNDSTGESNANNSKG) the composition is skewed to polar residues.

Belongs to the Mediator complex subunit 13 family. As to quaternary structure, component of the SRB8-11 complex, which itself associates with the Mediator complex.

The protein resides in the nucleus. Functionally, component of the SRB8-11 complex. The SRB8-11 complex is a regulatory module of the Mediator complex which is itself involved in regulation of basal and activated RNA polymerase II-dependent transcription. The SRB8-11 complex may be involved in the transcriptional repression of a subset of genes regulated by Mediator. It may inhibit the association of the Mediator complex with RNA polymerase II to form the holoenzyme complex. This is Mediator of RNA polymerase II transcription subunit 13 (SSN2) from Candida glabrata (strain ATCC 2001 / BCRC 20586 / JCM 3761 / NBRC 0622 / NRRL Y-65 / CBS 138) (Yeast).